Here is a 174-residue protein sequence, read N- to C-terminus: Adenine phosphoribosyltransferase (174 aa).

It belongs to the purine/pyrimidine phosphoribosyltransferase family. As to quaternary structure, homodimer.

It localises to the cytoplasm. It carries out the reaction AMP + diphosphate = 5-phospho-alpha-D-ribose 1-diphosphate + adenine. Its pathway is purine metabolism; AMP biosynthesis via salvage pathway; AMP from adenine: step 1/1. Its function is as follows. Catalyzes a salvage reaction resulting in the formation of AMP, that is energically less costly than de novo synthesis. This chain is Adenine phosphoribosyltransferase, found in Nitrosomonas eutropha (strain DSM 101675 / C91 / Nm57).